We begin with the raw amino-acid sequence, 541 residues long: Myrosinase 1 (541 aa).

A signal peptide spans 1–19; that stretch reads MKLLMLAFVFLLALATCKG. 3 disulfides stabilise this stretch: C24–C449, C32–C445, and C224–C232. An N-linked (GlcNAc...) asparagine glycan is attached at N33. An a beta-D-glucoside-binding site is contributed by Q57. Residue N108 is glycosylated (N-linked (GlcNAc...) asparagine). H159 is an a beta-D-glucoside binding site. An N-linked (GlcNAc...) asparagine glycan is attached at N175. 204-205 is a binding site for a beta-D-glucoside; sequence NQ. The N-linked (GlcNAc...) asparagine glycan is linked to N236. Residue Y348 coordinates a beta-D-glucoside. 2 N-linked (GlcNAc...) asparagine glycosylation sites follow: N356 and N379. A beta-D-glucoside is bound by residues E420, W468, 475–476, and F484; that span reads EF. E420 functions as the Nucleophile in the catalytic mechanism. N-linked (GlcNAc...) asparagine glycosylation is found at N493 and N512.

This sequence belongs to the glycosyl hydrolase 1 family. In terms of assembly, homodimer. As to expression, expressed in guard cells, phloem-associated cells and myrosin cells.

Its subcellular location is the vacuole. The catalysed reaction is a thioglucoside + H2O = a sugar + a thiol.. It carries out the reaction Hydrolysis of terminal, non-reducing beta-D-glucosyl residues with release of beta-D-glucose.. Degradation of glucosinolates (glucose residue linked by a thioglucoside bound to an amino acid derivative) to glucose, sulfate and any of the products: thiocyanates, isothiocyanates, nitriles, epithionitriles or oxazolidine-2-thiones. These toxic degradation products can deter insect herbivores. Seems to function in abscisic acid (ABA) and methyl jasmonate (MeJA) signaling in guard cells. Functionally redundant with TGG2. Hydrolyzes sinigrin and, with lower efficiency, p-nitrophenyl beta-D-glucoside. The protein is Myrosinase 1 of Arabidopsis thaliana (Mouse-ear cress).